The following is a 202-amino-acid chain: Large ribosomal subunit protein uL13 (202 aa).

The protein belongs to the universal ribosomal protein uL13 family. Component of the large ribosomal subunit (LSU). Mature N.crassa ribosomes consist of a small (40S) and a large (60S) subunit. The 40S small subunit contains 1 molecule of ribosomal RNA (18S rRNA) and at least 32 different proteins. The large 60S subunit contains 3 rRNA molecules (26S, 5.8S and 5S rRNA) and at least 42 different proteins.

The protein resides in the cytoplasm. In terms of biological role, component of the ribosome, a large ribonucleoprotein complex responsible for the synthesis of proteins in the cell. The small ribosomal subunit (SSU) binds messenger RNAs (mRNAs) and translates the encoded message by selecting cognate aminoacyl-transfer RNA (tRNA) molecules. The large subunit (LSU) contains the ribosomal catalytic site termed the peptidyl transferase center (PTC), which catalyzes the formation of peptide bonds, thereby polymerizing the amino acids delivered by tRNAs into a polypeptide chain. The nascent polypeptides leave the ribosome through a tunnel in the LSU and interact with protein factors that function in enzymatic processing, targeting, and the membrane insertion of nascent chains at the exit of the ribosomal tunnel. This is Large ribosomal subunit protein uL13 (crp-46) from Neurospora crassa (strain ATCC 24698 / 74-OR23-1A / CBS 708.71 / DSM 1257 / FGSC 987).